A 973-amino-acid chain; its full sequence is Translation initiation factor IF-2 (973 aa).

The tract at residues 52–388 (PDQEEVKPAA…QAQKPAQPLE (337 aa)) is disordered. 8 stretches are compositionally biased toward basic and acidic residues: residues 83-120 (ESRK…DHYK), 128-148 (VPSR…DKAR), 157-172 (QGAR…ERTR), 186-202 (VQQE…RPPF), 210-246 (PQHE…DKGA), 272-288 (RAGE…ETKP), 314-333 (LLDD…EKQK), and 343-360 (KSRE…ERLR). Low complexity predominate over residues 374–386 (AKPQEQAQKPAQP). The 170-residue stretch at 472–641 (DRPCVVTVMG…LLVAEMSELK (170 aa)) folds into the tr-type G domain. The segment at 481-488 (GHVDHGKT) is G1. 481–488 (GHVDHGKT) is a GTP binding site. Residues 506-510 (GITQH) form a G2 region. Residues 527–530 (DTPG) form a G3 region. Residues 527 to 531 (DTPGH) and 581 to 584 (NKID) each bind GTP. The segment at 581–584 (NKID) is G4. Residues 617-619 (SAL) form a G5 region.

It belongs to the TRAFAC class translation factor GTPase superfamily. Classic translation factor GTPase family. IF-2 subfamily.

The protein resides in the cytoplasm. In terms of biological role, one of the essential components for the initiation of protein synthesis. Protects formylmethionyl-tRNA from spontaneous hydrolysis and promotes its binding to the 30S ribosomal subunits. Also involved in the hydrolysis of GTP during the formation of the 70S ribosomal complex. This is Translation initiation factor IF-2 from Pelotomaculum thermopropionicum (strain DSM 13744 / JCM 10971 / SI).